The following is a 325-amino-acid chain: Glutarate 2-hydroxylase (325 aa).

Residues His160, Asp162, and His292 each coordinate Fe cation.

Belongs to the glutarate hydroxylase family. Homotetramer. It depends on Fe(2+) as a cofactor.

The catalysed reaction is glutarate + 2-oxoglutarate + O2 = (S)-2-hydroxyglutarate + succinate + CO2. The protein operates within amino-acid degradation. Acts as an alpha-ketoglutarate-dependent dioxygenase catalyzing hydroxylation of glutarate (GA) to L-2-hydroxyglutarate (L2HG). Functions in a L-lysine degradation pathway that proceeds via cadaverine, glutarate and L-2-hydroxyglutarate. This is Glutarate 2-hydroxylase from Citrobacter koseri (strain ATCC BAA-895 / CDC 4225-83 / SGSC4696).